A 72-amino-acid polypeptide reads, in one-letter code: Inner membrane protein YmgF (72 aa).

Over 1 to 9 the chain is Cytoplasmic; sequence MNNSNNLDY. A helical membrane pass occupies residues 10-30; that stretch reads FTLYIIFSIAFMLITLLVILI. The Periplasmic segment spans residues 31–34; it reads AKPS. The helical transmembrane segment at 35 to 55 threads the bilayer; it reads TGLGEVLVTINLLNALVWLAI. Residues 56–72 are Cytoplasmic-facing; the sequence is NLVNRLRERLVNHRDQQ.

In terms of assembly, interacts with FtsL, FtsQ, FtsI, FtsN, and probably many other cell division proteins.

The protein resides in the cell inner membrane. Its function is as follows. Could be involved in cell division. May participate in the stabilization of the cell divisome under specific conditions. This is Inner membrane protein YmgF (ymgF) from Escherichia coli (strain K12).